Consider the following 244-residue polypeptide: Histone H1, orphon (244 aa).

Residues methionine 1–proline 21 show a composition bias toward low complexity. Disordered regions lie at residues methionine 1 to glutamate 59 and glutamine 113 to lysine 244. Basic and acidic residues predominate over residues proline 35–proline 45. Residues threonine 53–proline 127 form the H15 domain. The segment covering alanine 186–proline 203 has biased composition (low complexity). A compositionally biased stretch (basic residues) spans alanine 213–lysine 244.

Belongs to the histone H1/H5 family.

It localises to the nucleus. Its subcellular location is the chromosome. Functionally, histones H1 are necessary for the condensation of nucleosome chains into higher-order structures. The protein is Histone H1, orphon of Chironomus thummi thummi (Midge).